A 334-amino-acid chain; its full sequence is 4-hydroxyproline 2-epimerase (334 aa).

C90 acts as the Proton acceptor in catalysis. Substrate-binding positions include 91–92 (GH), H223, and D249. C253 serves as the catalytic Proton donor. 254–255 (GT) contacts substrate.

It belongs to the proline racemase family. As to quaternary structure, homodimer.

The enzyme catalyses trans-4-hydroxy-L-proline = cis-4-hydroxy-D-proline. Its function is as follows. Catalyzes the epimerization of trans-4-hydroxy-L-proline (t4LHyp) to cis-4-hydroxy-D-proline (c4DHyp). Is likely involved in a degradation pathway that converts t4LHyp to alpha-ketoglutarate, which would allow P.denitrificans to grow on t4LHyp as a sole carbon source. Also seems to be involved in an alternative catabolic pathway that degrades trans-4-hydroxy-L-proline betaine (tHyp-B) to alpha-ketoglutarate; this pathway would permit the utilization of tHyp-B as a sole carbon and nitrogen source. The sequence is that of 4-hydroxyproline 2-epimerase (hypF) from Paracoccus denitrificans (strain Pd 1222).